We begin with the raw amino-acid sequence, 311 residues long: Eukaryotic translation initiation factor 3 subunit E (311 aa).

In terms of domain architecture, PCI spans 100–280 (VYYNYPKGRD…MGVKSVSIHE (181 aa)).

This sequence belongs to the eIF-3 subunit E family. As to quaternary structure, component of the eukaryotic translation initiation factor 3 (eIF-3) complex.

The protein resides in the cytoplasm. Component of the eukaryotic translation initiation factor 3 (eIF-3) complex, which is involved in protein synthesis of a specialized repertoire of mRNAs and, together with other initiation factors, stimulates binding of mRNA and methionyl-tRNAi to the 40S ribosome. The eIF-3 complex specifically targets and initiates translation of a subset of mRNAs involved in cell proliferation. In Caenorhabditis briggsae, this protein is Eukaryotic translation initiation factor 3 subunit E.